Consider the following 105-residue polypeptide: Met repressor (105 aa).

It belongs to the MetJ family. As to quaternary structure, homodimer.

It is found in the cytoplasm. This regulatory protein, when combined with SAM (S-adenosylmethionine) represses the expression of the methionine regulon and of enzymes involved in SAM synthesis. This is Met repressor from Haemophilus influenzae (strain PittEE).